A 469-amino-acid chain; its full sequence is 3-isopropylmalate dehydratase large subunit (469 aa).

[4Fe-4S] cluster is bound by residues Cys350, Cys410, and Cys413.

The protein belongs to the aconitase/IPM isomerase family. LeuC type 1 subfamily. Heterodimer of LeuC and LeuD. [4Fe-4S] cluster serves as cofactor.

It carries out the reaction (2R,3S)-3-isopropylmalate = (2S)-2-isopropylmalate. Its pathway is amino-acid biosynthesis; L-leucine biosynthesis; L-leucine from 3-methyl-2-oxobutanoate: step 2/4. Its function is as follows. Catalyzes the isomerization between 2-isopropylmalate and 3-isopropylmalate, via the formation of 2-isopropylmaleate. This chain is 3-isopropylmalate dehydratase large subunit, found in Sinorhizobium medicae (strain WSM419) (Ensifer medicae).